We begin with the raw amino-acid sequence, 353 residues long: Phosphoribosylformylglycinamidine cyclo-ligase (353 aa).

Belongs to the AIR synthase family.

Its subcellular location is the cytoplasm. It carries out the reaction 2-formamido-N(1)-(5-O-phospho-beta-D-ribosyl)acetamidine + ATP = 5-amino-1-(5-phospho-beta-D-ribosyl)imidazole + ADP + phosphate + H(+). It functions in the pathway purine metabolism; IMP biosynthesis via de novo pathway; 5-amino-1-(5-phospho-D-ribosyl)imidazole from N(2)-formyl-N(1)-(5-phospho-D-ribosyl)glycinamide: step 2/2. The protein is Phosphoribosylformylglycinamidine cyclo-ligase of Ralstonia nicotianae (strain ATCC BAA-1114 / GMI1000) (Ralstonia solanacearum).